The following is a 184-amino-acid chain: GTP cyclohydrolase 1 (184 aa).

Residues C75, H78, and C146 each contribute to the Zn(2+) site.

The protein belongs to the GTP cyclohydrolase I family. Toroid-shaped homodecamer, composed of two pentamers of five dimers.

It carries out the reaction GTP + H2O = 7,8-dihydroneopterin 3'-triphosphate + formate + H(+). It participates in cofactor biosynthesis; 7,8-dihydroneopterin triphosphate biosynthesis; 7,8-dihydroneopterin triphosphate from GTP: step 1/1. This is GTP cyclohydrolase 1 from Pseudoalteromonas translucida (strain TAC 125).